Consider the following 828-residue polypeptide: Zinc finger protein 438 (828 aa).

Disordered regions lie at residues 1 to 29 (MQNS…KGLQ), 143 to 173 (KSGC…LYKP), and 193 to 231 (ALTN…PAKQ). 2 stretches are compositionally biased toward polar residues: residues 16-29 (NIPS…KGLQ) and 150-159 (PAQTQMCPQM). 3 C2H2-type zinc fingers span residues 507–529 (HRCH…MNTH), 535–557 (YSCR…MKLH), and 567–590 (MCCE…KEVH). The segment at 680–721 (EGTFPGSKGTQEELVQHASPDWKRHPERGKPEKVHSSSEESH) is disordered. A compositionally biased stretch (basic and acidic residues) spans 689–721 (TQEELVQHASPDWKRHPERGKPEKVHSSSEESH). Residues 776–799 (FNCLLCAEMLGRKEDLLHHWKHQH) form a C2H2-type 4 zinc finger.

It belongs to the krueppel C2H2-type zinc-finger protein family. In terms of tissue distribution, ubiquitous.

It is found in the nucleus. Functionally, isoform 1 acts as a transcriptional repressor. The polypeptide is Zinc finger protein 438 (ZNF438) (Homo sapiens (Human)).